Consider the following 380-residue polypeptide: Type 4 apparatus protein DotM (380 aa).

The next 2 helical transmembrane spans lie at 18-38 (MAPV…WALA) and 99-119 (YPVI…NVTL).

The T4BSS is a complex nanomachine composed of several subcomplexes. This subunit is part of the Type IV Coupling Complex (T4CC), a subcomplex composed of the DotLMNYZ core and the IcmSW-LvgA adapter subunits, linked by the C-terminal tail of DotL. Six DotLMNYZ hetero-pentameric units may assemble into a hexameric nanomachine, forming an inner membrane channel for effectors to pass through. Interacts directly with DotL.

The protein resides in the cell inner membrane. Its function is as follows. Component of the Dot/Icm type IVB secretion system (T4BSS), which is used to inject bacterial effector proteins into eukaryotic host cells. Part of a subcomplex which recruits effector proteins and delivers them to the core transmembrane subcomplex. Forms the interacting surface for recruitment of acidic Glu-rich motif-containing effectors. In Legionella pneumophila subsp. pneumophila (strain Philadelphia 1 / ATCC 33152 / DSM 7513), this protein is Type 4 apparatus protein DotM.